A 473-amino-acid polypeptide reads, in one-letter code: MKTLYSPRRFYPVETLFNGTLTLAGRDQETTGFAWWAGNARLINLSGKLLGAHVSHAGLIVFWAGSMNLFEVAHFIPEKPMYEQGLILLPHLATLGWGVGPGGEIVDTFPYFVSGVLHLISSAVLGFGGIYHALIGPETLEESFPFFGYTWKDRNKMTTILGIHLILLGAGAFLLVFKALFFGGIYDTWAPGGGDVRKITNLTLSPNIIFGYLLKSPFGGEGWIVSVDNLEDLIGGHFWLGSICIFGGIWHILTKPFAWTRRAFVWSGEAYLSYSLGALSVFGFIACCFVWFNNTAYPSEFYGPTGPEASQAQAFTFLVRDQRLGASVGSAQGPTGLGKYLMRSPTGEIIFGGETMRFWDLRAPWLEPLRGPNGLDLSKLKKDIQPWQERRSAEYMTHAPLGSLNSVGGVATEINAVNFVSPRSWLATSHFVLGFFFFVGHLWHAGRARAAAAGFEKGIDRDLEPVLFMTPLN.

A propeptide spanning residues 1–14 is cleaved from the precursor; that stretch reads MKTLYSPRRFYPVE. At threonine 15 the chain carries N-acetylthreonine. Position 15 is a phosphothreonine (threonine 15). Helical transmembrane passes span 69–93, 134–155, 178–200, 255–275, and 291–312; these read LFEVAHFIPEKPMYEQGLILLPHLA, LIGPETLEESFPFFGYTWKDRN, KALFFGGIYDTWAPGGGDVRKIT, KPFAWTRRAFVWSGEAYLSYS, and WFNNTAYPSEFYGPTGPEASQA. Glutamate 367 lines the [CaMn4O5] cluster pocket. The chain crosses the membrane as a helical span at residues 447–471; sequence RARAAAAGFEKGIDRDLEPVLFMTP.

The protein belongs to the PsbB/PsbC family. PsbC subfamily. In terms of assembly, PSII is composed of 1 copy each of membrane proteins PsbA, PsbB, PsbC, PsbD, PsbE, PsbF, PsbH, PsbI, PsbJ, PsbK, PsbL, PsbM, PsbT, PsbX, PsbY, PsbZ, Psb30/Ycf12, at least 3 peripheral proteins of the oxygen-evolving complex and a large number of cofactors. It forms dimeric complexes. It depends on Binds multiple chlorophylls and provides some of the ligands for the Ca-4Mn-5O cluster of the oxygen-evolving complex. It may also provide a ligand for a Cl- that is required for oxygen evolution. PSII binds additional chlorophylls, carotenoids and specific lipids. as a cofactor.

The protein localises to the plastid. It localises to the chloroplast thylakoid membrane. In terms of biological role, one of the components of the core complex of photosystem II (PSII). It binds chlorophyll and helps catalyze the primary light-induced photochemical processes of PSII. PSII is a light-driven water:plastoquinone oxidoreductase, using light energy to abstract electrons from H(2)O, generating O(2) and a proton gradient subsequently used for ATP formation. This chain is Photosystem II CP43 reaction center protein, found in Gnetum parvifolium (Small-leaved jointfir).